The chain runs to 71 residues: Small ribosomal subunit protein bS21 (71 aa).

Basic residues predominate over residues 48–59; the sequence is EKASLAKRHAKR. Residues 48–71 form a disordered region; that stretch reads EKASLAKRHAKRNARENARNTRLY. The span at 60–71 shows a compositional bias: basic and acidic residues; sequence NARENARNTRLY.

This sequence belongs to the bacterial ribosomal protein bS21 family.

The sequence is that of Small ribosomal subunit protein bS21 from Actinobacillus pleuropneumoniae serotype 5b (strain L20).